A 464-amino-acid polypeptide reads, in one-letter code: MKTRIETDSMGEIAVDDSKYWGAQTERSLHHFHIGNDRFPREMIRALGILKKSAAVVNAELGLLSEDKKKLIVQAADEVISGKLDEHFPLSVWQTGSGTQTNMNSNEVISNRAIEIAGGVKGSKKPIHPNDDVNKAQSSNDTFPTAMHIAAAEQLNQKLIPALIQLKETFKKKTDEFQNIIKIGRTHLQDATPLTLGQEFSGYVQQLEYNIARVKAVLPSVYRLALGGTAVGTGLNTHPQFAVKAAAQIAKETGLPFVSAENKFEALAAHDSLVETSGVLKTIAASLMKIANDIRWLSSGPRCGIGEISIPENEPGSSIMPGKVNPTQSEQMTMVAAQVIANDVAVNIGGASGNFELNVFKPLIIHNVLNSIRLLSDSCVSFEEHCARGIIPNKEKLNEHLNNSLMLVTALNPHIGYDNAAKIAKNAHKKGTTLKESGIELGLLTSEQFDQWVLPEKMIHPSVD.

Residues 97–99 (SGT), 128–131 (HPND), 138–140 (SSN), and threonine 186 each bind substrate. Histidine 187 functions as the Proton donor/acceptor in the catalytic mechanism. Residue serine 317 is part of the active site. Residues serine 318 and 323-325 (KVN) each bind substrate.

It belongs to the class-II fumarase/aspartase family. Fumarase subfamily. In terms of assembly, homotetramer.

It localises to the cytoplasm. The catalysed reaction is (S)-malate = fumarate + H2O. It participates in carbohydrate metabolism; tricarboxylic acid cycle; (S)-malate from fumarate: step 1/1. In terms of biological role, involved in the TCA cycle. Catalyzes the stereospecific interconversion of fumarate to L-malate. This Leptospira interrogans serogroup Icterohaemorrhagiae serovar copenhageni (strain Fiocruz L1-130) protein is Fumarate hydratase class II.